We begin with the raw amino-acid sequence, 134 residues long: Large ribosomal subunit protein eL32 (134 aa).

The protein belongs to the eukaryotic ribosomal protein eL32 family.

The protein is Large ribosomal subunit protein eL32 (RpL32) of Drosophila affinis (Fruit fly).